The following is a 200-amino-acid chain: Imidazoleglycerol-phosphate dehydratase (200 aa).

Belongs to the imidazoleglycerol-phosphate dehydratase family.

Its subcellular location is the cytoplasm. The catalysed reaction is D-erythro-1-(imidazol-4-yl)glycerol 3-phosphate = 3-(imidazol-4-yl)-2-oxopropyl phosphate + H2O. The protein operates within amino-acid biosynthesis; L-histidine biosynthesis; L-histidine from 5-phospho-alpha-D-ribose 1-diphosphate: step 6/9. This chain is Imidazoleglycerol-phosphate dehydratase, found in Prosthecochloris aestuarii (strain DSM 271 / SK 413).